Here is a 309-residue protein sequence, read N- to C-terminus: Aspartate carbamoyltransferase catalytic subunit (309 aa).

Carbamoyl phosphate-binding residues include arginine 55 and threonine 56. Residue lysine 85 participates in L-aspartate binding. Residues arginine 106, histidine 135, and glutamine 138 each contribute to the carbamoyl phosphate site. Residues arginine 168 and arginine 230 each coordinate L-aspartate. Positions 268 and 269 each coordinate carbamoyl phosphate.

It belongs to the aspartate/ornithine carbamoyltransferase superfamily. ATCase family. In terms of assembly, heterododecamer (2C3:3R2) of six catalytic PyrB chains organized as two trimers (C3), and six regulatory PyrI chains organized as three dimers (R2).

The catalysed reaction is carbamoyl phosphate + L-aspartate = N-carbamoyl-L-aspartate + phosphate + H(+). Its pathway is pyrimidine metabolism; UMP biosynthesis via de novo pathway; (S)-dihydroorotate from bicarbonate: step 2/3. Its function is as follows. Catalyzes the condensation of carbamoyl phosphate and aspartate to form carbamoyl aspartate and inorganic phosphate, the committed step in the de novo pyrimidine nucleotide biosynthesis pathway. This is Aspartate carbamoyltransferase catalytic subunit from Vibrio cholerae serotype O1 (strain ATCC 39315 / El Tor Inaba N16961).